The following is a 102-amino-acid chain: Large ribosomal subunit protein bL21 (102 aa).

It belongs to the bacterial ribosomal protein bL21 family. As to quaternary structure, part of the 50S ribosomal subunit. Contacts protein L20.

Its function is as follows. This protein binds to 23S rRNA in the presence of protein L20. The polypeptide is Large ribosomal subunit protein bL21 (Sulfurimonas denitrificans (strain ATCC 33889 / DSM 1251) (Thiomicrospira denitrificans (strain ATCC 33889 / DSM 1251))).